The sequence spans 219 residues: 2-hydroxy-3-keto-5-methylthiopentenyl-1-phosphate phosphatase (219 aa).

It belongs to the HAD-like hydrolase superfamily. MtnX family.

The enzyme catalyses 2-hydroxy-5-methylsulfanyl-3-oxopent-1-enyl phosphate + H2O = 1,2-dihydroxy-5-(methylsulfanyl)pent-1-en-3-one + phosphate. Its pathway is amino-acid biosynthesis; L-methionine biosynthesis via salvage pathway; L-methionine from S-methyl-5-thio-alpha-D-ribose 1-phosphate: step 4/6. In terms of biological role, dephosphorylates 2-hydroxy-3-keto-5-methylthiopentenyl-1-phosphate (HK-MTPenyl-1-P) yielding 1,2-dihydroxy-3-keto-5-methylthiopentene (DHK-MTPene). In Bacillus cytotoxicus (strain DSM 22905 / CIP 110041 / 391-98 / NVH 391-98), this protein is 2-hydroxy-3-keto-5-methylthiopentenyl-1-phosphate phosphatase.